Here is a 301-residue protein sequence, read N- to C-terminus: Dimethylsulfoniopropionate lyase (301 aa).

Active-site proton donor/acceptor residues include cysteine 111 and cysteine 230.

It belongs to the aspartate/glutamate racemases family. ALMA1 subfamily. In terms of assembly, homotetramer.

It catalyses the reaction S,S-dimethyl-beta-propiothetin = acrylate + dimethyl sulfide + H(+). Its function is as follows. Mediates cleavage of dimethylsulfoniopropionate (DMSP) into dimethyl sulfide (DMS) and acrylate. DMS is the principal form by which sulfur is transported from oceans to the atmosphere and is a key component of the ocean sulfur cycle. The sequence is that of Dimethylsulfoniopropionate lyase from Durusdinium sp. clade D (Symbiodinium sp. clade D).